Consider the following 114-residue polypeptide: Large ribosomal subunit protein bL20c (114 aa).

The protein belongs to the bacterial ribosomal protein bL20 family.

Its subcellular location is the plastid. Functionally, binds directly to 23S ribosomal RNA and is necessary for the in vitro assembly process of the 50S ribosomal subunit. It is not involved in the protein synthesizing functions of that subunit. The sequence is that of Large ribosomal subunit protein bL20c from Prototheca wickerhamii.